The following is a 537-amino-acid chain: Tegument protein BRRF2 (537 aa).

2 disordered regions span residues 322–466 and 486–537; these read PRFL…AEEF and GLRV…LSVV. Residues 334–347 show a composition bias toward polar residues; sequence EPQQTCSQLTSRGN. A compositionally biased stretch (low complexity) spans 420 to 441; that stretch reads VTGSSQAAPSSSSVTPVASLSG. Positions 492–517 are enriched in acidic residues; the sequence is DEDEDGSEDGEFSDLDLSDSDHEGDE.

It belongs to the lymphocryptovirus BRRF2 family.

Its subcellular location is the virion tegument. The sequence is that of Tegument protein BRRF2 from Homo sapiens (Human).